Reading from the N-terminus, the 379-residue chain is Putative 8-amino-7-oxononanoate synthase (379 aa).

Arg-21 is a substrate binding site. 97–98 (GY) provides a ligand contact to pyridoxal 5'-phosphate. A substrate-binding site is contributed by His-122. Pyridoxal 5'-phosphate contacts are provided by residues Ser-169, 194–197 (DDAH), and 223–226 (TLSK). At Lys-226 the chain carries N6-(pyridoxal phosphate)lysine. Residue Thr-340 coordinates substrate.

This sequence belongs to the class-II pyridoxal-phosphate-dependent aminotransferase family. BioF subfamily. Homodimer. Pyridoxal 5'-phosphate is required as a cofactor.

The enzyme catalyses 6-carboxyhexanoyl-[ACP] + L-alanine + H(+) = (8S)-8-amino-7-oxononanoate + holo-[ACP] + CO2. It participates in cofactor biosynthesis; biotin biosynthesis. In terms of biological role, catalyzes the decarboxylative condensation of pimeloyl-[acyl-carrier protein] and L-alanine to produce 8-amino-7-oxononanoate (AON), [acyl-carrier protein], and carbon dioxide. The polypeptide is Putative 8-amino-7-oxononanoate synthase (bioF) (Bacillus licheniformis (strain ATCC 14580 / DSM 13 / JCM 2505 / CCUG 7422 / NBRC 12200 / NCIMB 9375 / NCTC 10341 / NRRL NRS-1264 / Gibson 46)).